Consider the following 291-residue polypeptide: Sulfotransferase 1A1 (291 aa).

Residue 44–49 coordinates 3'-phosphoadenylyl sulfate; it reads KSGTNW. 102 to 104 lines the substrate pocket; it reads KTH. Catalysis depends on His104, which acts as the Proton acceptor. Residues Arg126, Ser134, Tyr189, 223–228, and 251–255 contribute to the 3'-phosphoadenylyl sulfate site; these read TSFKKM and FMRKG. The residue at position 134 (Ser134) is a Phosphoserine.

This sequence belongs to the sulfotransferase 1 family. As to quaternary structure, homodimer. Expressed in brain, colon, liver, and small intestine of mice colonized with B.ovatus and L.plantarum.

The protein resides in the cytoplasm. The catalysed reaction is a phenol + 3'-phosphoadenylyl sulfate = an aryl sulfate + adenosine 3',5'-bisphosphate + H(+). It carries out the reaction 17beta-estradiol + 3'-phosphoadenylyl sulfate = 17beta-estradiol 3-sulfate + adenosine 3',5'-bisphosphate + H(+). It catalyses the reaction 4-ethylphenol + 3'-phosphoadenylyl sulfate = 4-ethylphenyl sulfate + adenosine 3',5'-bisphosphate + H(+). The enzyme catalyses 4-nitrophenol + 3'-phosphoadenylyl sulfate = 4-nitrophenyl sulfate + adenosine 3',5'-bisphosphate. The catalysed reaction is dopamine + 3'-phosphoadenylyl sulfate = dopamine 3-O-sulfate + adenosine 3',5'-bisphosphate + H(+). It carries out the reaction dopamine + 3'-phosphoadenylyl sulfate = dopamine 4-O-sulfate + adenosine 3',5'-bisphosphate + H(+). It catalyses the reaction 3,3',5-triiodo-L-thyronine + 3'-phosphoadenylyl sulfate = 3,3',5-triiodo-L-thyronine sulfate + adenosine 3',5'-bisphosphate + H(+). The enzyme catalyses 3,3',5'-triiodo-L-thyronine + 3'-phosphoadenylyl sulfate = 3,3',5'-triiodo-L-thyronine sulfate + adenosine 3',5'-bisphosphate + H(+). The catalysed reaction is 3,3'-diiodo-L-thyronine + 3'-phosphoadenylyl sulfate = 3,3'-diiodo-L-thyronine sulfate + adenosine 3',5'-bisphosphate + H(+). It carries out the reaction L-thyroxine + 3'-phosphoadenylyl sulfate = L-thyroxine sulfate + adenosine 3',5'-bisphosphate + H(+). In terms of biological role, sulfotransferase that utilizes 3'-phospho-5'-adenylyl sulfate (PAPS) as sulfonate donor to catalyze the sulfate conjugation of a wide variety of acceptor molecules bearing a hydroxyl or an amine group. Sulfonation increases the water solubility of most compounds, and therefore their renal excretion, but it can also result in bioactivation to form active metabolites. Displays broad substrate specificity for small phenolic compounds. Plays an important role in the sulfonation of endogenous molecules such as steroid hormones. Mediates also the metabolic activation of carcinogenic N-hydroxyarylamines leading to highly reactive intermediates capable of forming DNA adducts, potentially resulting in mutagenesis. May play a role in gut microbiota-host metabolic interaction. O-sulfonates 4-ethylphenol (4-EP), a dietary tyrosine-derived metabolite produced by gut bacteria. The product 4-EPS crosses the blood-brain barrier and may negatively regulate oligodendrocyte maturation and myelination, affecting the functional connectivity of different brain regions associated with the limbic system. Catalyzes the sulfate conjugation of dopamine. Catalyzes the sulfation of T4 (L-thyroxine/3,5,3',5'-tetraiodothyronine), T3 (3,5,3'-triiodothyronine), rT3 (3,3',5'-triiodothyronine) and 3,3'-T2 (3,3'-diiodothyronine), with a substrate preference of 3,3'-T2 &gt; rT3 &gt; T3 &gt; T4. The chain is Sulfotransferase 1A1 (Sult1a1) from Mus musculus (Mouse).